The chain runs to 665 residues: Potassium-transporting ATPase ATP-binding subunit (665 aa).

4 helical membrane passes run M28–F48, Y56–M76, I207–I227, and I244–I264. D295 serves as the catalytic 4-aspartylphosphate intermediate. ATP contacts are provided by residues D332, E336, F364 to S371, and K382. Positions 501 and 505 each coordinate Mg(2+). The next 3 membrane-spanning stretches (helical) occupy residues Y570–L590, I596–L616, and V644–V664.

The protein belongs to the cation transport ATPase (P-type) (TC 3.A.3) family. Type IA subfamily. In terms of assembly, the system is composed of three essential subunits: KdpA, KdpB and KdpC.

It localises to the cell membrane. It catalyses the reaction K(+)(out) + ATP + H2O = K(+)(in) + ADP + phosphate + H(+). Its function is as follows. Part of the high-affinity ATP-driven potassium transport (or Kdp) system, which catalyzes the hydrolysis of ATP coupled with the electrogenic transport of potassium into the cytoplasm. This subunit is responsible for energy coupling to the transport system and for the release of the potassium ions to the cytoplasm. This Thermoplasma acidophilum (strain ATCC 25905 / DSM 1728 / JCM 9062 / NBRC 15155 / AMRC-C165) protein is Potassium-transporting ATPase ATP-binding subunit.